The sequence spans 244 residues: Acetoacetate decarboxylase (244 aa).

Residue Lys115 is the Schiff-base intermediate with acetoacetate of the active site.

Belongs to the ADC family.

It carries out the reaction acetoacetate + H(+) = acetone + CO2. Its function is as follows. Catalyzes the conversion of acetoacetate to acetone and carbon dioxide. The protein is Acetoacetate decarboxylase of Streptomyces nogalater.